A 300-amino-acid polypeptide reads, in one-letter code: Cation-efflux pump FieF (300 aa).

4 consecutive transmembrane segments (helical) span residues 11–31, 40–60, 81–101, and 114–134; these read LAAVSATAVALVLFIMKVFAW, LASLVDSLVDIAASLVNLLVV, LAALAQSMFISGSALFLILTG, and PEVGMWVTLIALVATLLLVSF. Zn(2+) is bound by residues aspartate 45 and aspartate 49. Residues histidine 153 and aspartate 157 each contribute to the Zn(2+) site. 2 helical membrane passes run 156–176 and 182–202; these read SDLLMNGAILVALALSWKGIT and FALGIGGYILYSALRMGYDAV.

The protein belongs to the cation diffusion facilitator (CDF) transporter (TC 2.A.4) family. FieF subfamily. In terms of assembly, homodimer.

The protein localises to the cell inner membrane. It carries out the reaction Zn(2+)(in) + H(+)(out) = Zn(2+)(out) + H(+)(in). The catalysed reaction is Cd(2+)(in) + H(+)(out) = Cd(2+)(out) + H(+)(in). The enzyme catalyses Fe(2+)(in) + H(+)(out) = Fe(2+)(out) + H(+)(in). Divalent metal cation transporter which exports Zn(2+), Cd(2+) and possibly Fe(2+). May be involved in zinc and iron detoxification by efflux. The protein is Cation-efflux pump FieF of Pectobacterium carotovorum subsp. carotovorum (strain PC1).